The following is a 475-amino-acid chain: Ankyrin repeat, SAM and basic leucine zipper domain-containing protein 1 (475 aa).

The tract at residues 1–25 is disordered; that stretch reads MAAGALRGLPVAGGGESSESEDDGW. Ser17, Ser18, and Ser20 each carry phosphoserine. ANK repeat units follow at residues 45 to 74, 78 to 107, 110 to 144, 148 to 177, 181 to 210, and 214 to 243; these read EKKEKFKKAMTIGDVSLVQELLDSGISVDS, YGWTPLMYAASVANAELVRVLLDRGANASF, DKQSILITACSAHGSEELILKCVELLLSRNADPNV, RLMTPIMYAARDGHTQVVALLVAHGAEVNT, NGYTALTWAARQGHKNIVLKLLELGANKML, and DGKMPSEIAKRNKHHEIFNLLSFTLNPLEG. The SAM domain maps to 272-334; that stretch reads SYTAFGDLEV…KILAALKELQ (63 aa).

As to quaternary structure, interacts with DDX4, PIWIL1, RANBP9 and TDRD1.

Its subcellular location is the cytoplasm. In terms of biological role, plays a central role during spermatogenesis by repressing transposable elements and preventing their mobilization, which is essential for the germline integrity. Acts via the piRNA metabolic process, which mediates the repression of transposable elements during meiosis by forming complexes composed of piRNAs and Piwi proteins and governs the methylation and subsequent repression of transposons. Its association with pi-bodies suggests a participation in the primary piRNAs metabolic process. Required prior to the pachytene stage to facilitate the production of multiple types of piRNAs, including those associated with repeats involved in the regulation of retrotransposons. May act by mediating protein-protein interactions during germ cell maturation. This chain is Ankyrin repeat, SAM and basic leucine zipper domain-containing protein 1 (ASZ1), found in Nomascus leucogenys (Northern white-cheeked gibbon).